The sequence spans 532 residues: tRNA-2-methylthio-N(6)-dimethylallyladenosine synthase 2 (532 aa).

The interval 1–21 (MTSTVAHGAGSAGPADDAEPM) is disordered. One can recognise an MTTase N-terminal domain in the interval 24-140 (RTYQVRTYGC…LPALLDRARH (117 aa)). [4Fe-4S] cluster-binding residues include cysteine 33, cysteine 69, cysteine 103, cysteine 177, cysteine 181, and cysteine 184. Residues 163–399 (RESAYAAWVS…VELQEQISLE (237 aa)) enclose the Radical SAM core domain. The TRAM domain maps to 402–470 (RAIVGQRVEL…PHHLIADGGI (69 aa)). The tract at residues 510–532 (TSCGSAGGCGSADGAGSSAGDPQ) is disordered. The segment covering 523–532 (GAGSSAGDPQ) has biased composition (low complexity).

This sequence belongs to the methylthiotransferase family. MiaB subfamily. Monomer. [4Fe-4S] cluster serves as cofactor.

The protein localises to the cytoplasm. The catalysed reaction is N(6)-dimethylallyladenosine(37) in tRNA + (sulfur carrier)-SH + AH2 + 2 S-adenosyl-L-methionine = 2-methylsulfanyl-N(6)-dimethylallyladenosine(37) in tRNA + (sulfur carrier)-H + 5'-deoxyadenosine + L-methionine + A + S-adenosyl-L-homocysteine + 2 H(+). Functionally, catalyzes the methylthiolation of N6-(dimethylallyl)adenosine (i(6)A), leading to the formation of 2-methylthio-N6-(dimethylallyl)adenosine (ms(2)i(6)A) at position 37 in tRNAs that read codons beginning with uridine. In Mycobacterium marinum (strain ATCC BAA-535 / M), this protein is tRNA-2-methylthio-N(6)-dimethylallyladenosine synthase 2.